A 240-amino-acid chain; its full sequence is Adiponectin (240 aa).

Residues 1–17 (MLLQGALLLLLALPSHG) form the signal peptide. The residue at position 28 (lysine 28) is a 5-hydroxylysine. O-linked (Gal...) hydroxylysine glycosylation occurs at lysine 28. The interval 29-100 (GACAGWMAGI…GTPGRKGEPG (72 aa)) is disordered. S-(2-succinyl)cysteine is present on cysteine 31. Residues proline 39, proline 42, and proline 48 each carry the 4-hydroxyproline modification. The Collagen-like domain occupies 43 to 102 (GHNGTPGRDGRDGTPGEKGEKGDPGLVGPKGDTGETGITGIEGPRGFPGTPGRKGEPGES). The segment covering 50–65 (RDGRDGTPGEKGEKGD) has biased composition (basic and acidic residues). Lysine 60, lysine 63, and lysine 72 each carry 5-hydroxylysine. O-linked (Gal...) hydroxylysine glycosylation is found at lysine 60, lysine 63, and lysine 72. At proline 86 the chain carries 4-hydroxyproline. Position 96 is a 5-hydroxylysine (lysine 96). The O-linked (Gal...) hydroxylysine glycan is linked to lysine 96. A C1q domain is found at 103-240 (AYVYRSAFSV…GFLLYHNIVE (138 aa)).

As to quaternary structure, homomultimer. Forms trimers, hexamers and 12- to 18-mers. The trimers (low molecular weight complexes / LMW) are assembled via non-covalent interactions of the collagen-like domains in a triple helix and hydrophobic interactions within the globular C1q domain. Several trimers can associate to form disulfide-linked hexamers (middle molecular weight complexes / MMW) and larger complexes (higher molecular weight / HMW). The HMW-complex assembly is also modulated by the degree of lysine hydroxylation and glycosylation. LMW, MMW and HMW complexes bind to HBEGF, MMW and HMW complexes bind to PDGFB, and HMW complex binds to FGF2. Interacts with CTRP9 via the C1q domain (heterotrimeric complex). Post-translationally, HMW complexes are more extensively glycosylated than smaller oligomers. Hydroxylation and glycosylation of the lysine residues within the collagen-like domain of adiponectin seem to be critically involved in regulating the formation and/or secretion of HMW complexes and consequently contribute to the insulin-sensitizing activity of adiponectin in hepatocytes. O-glycosylated. O-linked glycans on hydroxylysine residues consist of Glc-Gal disaccharides bound to the oxygen atom of post-translationally added hydroxyl groups. O-linked glycosylations elsewhere disialylated with the structure Neu5Acalpha2-&gt;8Neu5Acalpha2-&gt;3Gal. Sialylated by alpha 2,8-sialyltransferase III. Desialylated forms are rapidly cleared from the circulation. Not N-glycosylated. In terms of processing, succination of Cys-31 by the Krebs cycle intermediate fumarate, which leads to S-(2-succinyl)cysteine residues, inhibits polymerization and secretion of adiponectin. Adiponectin is a major target for succination in both adipocytes and adipose tissue of diabetic mammals. It was proposed that succination of proteins is a biomarker of mitochondrial stress and accumulation of Krebs cycle intermediates in adipose tissue in diabetes and that succination of adiponectin may contribute to the decrease in plasma adiponectin in diabetes.

The protein resides in the secreted. Polymerization and secretion of adiponectin is inhibited by succination of cysteine residues by the Krebs cycle intermediate fumarate, which leads to S-(2-succinyl)cysteine residues. Functionally, important adipokine involved in the control of fat metabolism and insulin sensitivity, with direct anti-diabetic, anti-atherogenic and anti-inflammatory activities. Stimulates AMPK phosphorylation and activation in the liver and the skeletal muscle, enhancing glucose utilization and fatty-acid combustion. Antagonizes TNF-alpha by negatively regulating its expression in various tissues such as liver and macrophages, and also by counteracting its effects. Inhibits endothelial NF-kappa-B signaling through a cAMP-dependent pathway. May play a role in cell growth, angiogenesis and tissue remodeling by binding and sequestering various growth factors with distinct binding affinities, depending on the type of complex, LMW, MMW or HMW. This Bos taurus (Bovine) protein is Adiponectin (ADIPOQ).